Reading from the N-terminus, the 1057-residue chain is Probable E3 ubiquitin-protein ligase HERC4 (1057 aa).

7 RCC1 repeats span residues 1 to 51 (MLCW…FVLD), 52 to 101 (DGTV…ALND), 102 to 154 (KGQV…ALSK), 156 to 207 (SEVF…VLTL), 208 to 259 (SGAI…ALTK), 261 to 311 (GGVF…AFVP), and 313 to 366 (SGRI…CVKR). The HECT domain maps to 730–1057 (KNIDYKKPLK…IDHNEGFSLI (328 aa)). Catalysis depends on Cys1025, which acts as the Glycyl thioester intermediate.

The protein resides in the cytoplasm. It localises to the cytosol. It catalyses the reaction S-ubiquitinyl-[E2 ubiquitin-conjugating enzyme]-L-cysteine + [acceptor protein]-L-lysine = [E2 ubiquitin-conjugating enzyme]-L-cysteine + N(6)-ubiquitinyl-[acceptor protein]-L-lysine.. The protein operates within protein modification; protein ubiquitination. Probable E3 ubiquitin-protein ligase involved in either protein trafficking or in the distribution of cellular structures. Required for spermatozoon maturation and fertility, and for the removal of the cytoplasmic droplet of the spermatozoon. E3 ubiquitin-protein ligases accept ubiquitin from an E2 ubiquitin-conjugating enzyme in the form of a thioester and then directly transfer it to targeted substrates. The chain is Probable E3 ubiquitin-protein ligase HERC4 (Herc4) from Rattus norvegicus (Rat).